The sequence spans 403 residues: Large ribosomal subunit protein uL3 (403 aa).

The segment at 1-37 (MSHRKFSAPRHGSLGFLPRKRSSRHRGKVKSFPKDDP) is disordered. At S13 the chain carries Phosphoserine. Positions 18 to 31 (PRKRSSRHRGKVKS) are enriched in basic residues. K39 participates in a covalent cross-link: Glycyl lysine isopeptide (Lys-Gly) (interchain with G-Cter in SUMO2). An N6-acetyllysine modification is found at K136. Glycyl lysine isopeptide (Lys-Gly) (interchain with G-Cter in SUMO2) cross-links involve residues K224 and K226. Position 245 is a tele-methylhistidine (H245). N6-acetyllysine; alternate occurs at positions 286 and 294. Residue K286 forms a Glycyl lysine isopeptide (Lys-Gly) (interchain with G-Cter in SUMO2); alternate linkage. Residue K294 forms a Glycyl lysine isopeptide (Lys-Gly) (interchain with G-Cter in SUMO1); alternate linkage. The residue at position 304 (S304) is a Phosphoserine. N6-acetyllysine; alternate is present on K366. Residue K366 forms a Glycyl lysine isopeptide (Lys-Gly) (interchain with G-Cter in SUMO2); alternate linkage. At K373 the chain carries N6-acetyllysine. Residues K386, K393, and K399 each participate in a glycyl lysine isopeptide (Lys-Gly) (interchain with G-Cter in SUMO2) cross-link.

This sequence belongs to the universal ribosomal protein uL3 family. Component of the large ribosomal subunit. Interacts with DHX33. In terms of processing, constitutively monomethylated at His-245 by METTL18. Methylation at His-245 regulates translation elongation by slowing ribosome traversal on tyrosine codons: slower elongation provides enough time for proper folding of synthesized proteins and prevents cellular aggregation of tyrosine-rich proteins. It is not required for incorporation of RPL3 into ribosomes.

The protein resides in the nucleus. It localises to the nucleolus. The protein localises to the cytoplasm. In terms of biological role, component of the large ribosomal subunit. The ribosome is a large ribonucleoprotein complex responsible for the synthesis of proteins in the cell. This chain is Large ribosomal subunit protein uL3 (RPL3), found in Oryctolagus cuniculus (Rabbit).